A 212-amino-acid chain; its full sequence is MGVTCVSQMPVAEGKSVQQTVELLTKKLEMLGAEKQGTFCVDCETYHTAASTLGSQGQAGKLMYVMHNSEYPLSCFALFENGPCLIADTNFDVLMVKLKGFFQSAKASKIETRGTRYQYCDFLVKVGTVTMGPSARGISVEVEYGPCVVASDCWSLLLEFLQSFLGSHTPGAPTVFGNRHDAVYGPADTMVQYMELFNKVRKQQQVPVAGIR.

Belongs to the Mediator complex subunit 20 family. Component of the Mediator complex, which is composed of MED1, MED4, MED6, MED7, MED8, MED9, MED10, MED11, MED12, MED13, MED13L, MED14, MED15, MED16, MED17, MED18, MED19, MED20, MED21, MED22, MED23, MED24, MED25, MED26, MED27, MED29, MED30, MED31, CCNC, CDK8 and CDC2L6/CDK11. The MED12, MED13, CCNC and CDK8 subunits form a distinct module termed the CDK8 module. Mediator containing the CDK8 module is less active than Mediator lacking this module in supporting transcriptional activation. Individual preparations of the Mediator complex lacking one or more distinct subunits have been variously termed ARC, CRSP, DRIP, PC2, SMCC and TRAP. Interacts with PPARG.

It localises to the nucleus. Component of the Mediator complex, a coactivator involved in the regulated transcription of nearly all RNA polymerase II-dependent genes. Mediator functions as a bridge to convey information from gene-specific regulatory proteins to the basal RNA polymerase II transcription machinery. Mediator is recruited to promoters by direct interactions with regulatory proteins and serves as a scaffold for the assembly of a functional preinitiation complex with RNA polymerase II and the general transcription factors. This Rattus norvegicus (Rat) protein is Mediator of RNA polymerase II transcription subunit 20 (Med20).